The following is a 61-amino-acid chain: Small ribosomal subunit protein eS31 (61 aa).

Zn(2+) contacts are provided by C22, C25, C38, and C41. Residues C22–C41 form a C4-type zinc finger.

It belongs to the eukaryotic ribosomal protein eS31 family. Part of the 30S ribosomal subunit. Requires Zn(2+) as cofactor.

The polypeptide is Small ribosomal subunit protein eS31 (Nanoarchaeum equitans (strain Kin4-M)).